Consider the following 481-residue polypeptide: Argininosuccinate lyase (481 aa).

The span at 1–17 shows a compositional bias: polar residues; it reads MKNAPVDTQSDAATSFE. Residues 1 to 25 form a disordered region; it reads MKNAPVDTQSDAATSFEGTAANPQW.

Belongs to the lyase 1 family. Argininosuccinate lyase subfamily.

The protein resides in the cytoplasm. The catalysed reaction is 2-(N(omega)-L-arginino)succinate = fumarate + L-arginine. The protein operates within amino-acid biosynthesis; L-arginine biosynthesis; L-arginine from L-ornithine and carbamoyl phosphate: step 3/3. The sequence is that of Argininosuccinate lyase from Gluconobacter oxydans (strain 621H) (Gluconobacter suboxydans).